A 2443-amino-acid chain; its full sequence is MSRDKPPQREVGGRRLPYEMGSLKFDEDPFRGQRRRPWMCFRIGYPTSEFSSEHFMKFVKRCHTSMIEVGILLDDEREFLQYQEVREDYLLLKKLIEEGLQKCETIYEKGPLSTPVVFFILDQCDEDEVQNMLDMFRESCYIFHMKRNEILNWINEMEYEELESDCSKFAQFIKGVENLTESIAMPMEVETEEFIFGKSSIVSTEDFVEDAPHKQIAQDQRETRPIRQPYSMVRNLAPPGLPPPGISISNSSPPGLSSVSPIPRADTRESRYSTPQPPGLSIPAPPGISLPTPPGISLQNHQNDQFEQAHSTISRMSENSSSSRRRFRDEEVQEEEGDHILSSEDVHAARNVCETKILVRGVPQKNDSELSKLINGSKLYVRFERPFVKLAHNLELLYVVNYAISSRKSIVRDHSKAIIRGLFEKDFLLKLKSKFLESSFDNDTWTPEGTELLFEIFHLFFTTARYKGGFMLTLPRFAPSWHDFSMAFDIADMDGLEEAGVGDDELRNLRRLIGYIETWIKRAERERNPSPLALRSYSVYEKAGSSDSGRQVLSESRGAGSSNVYGHDEVDFVDHRRRDEFGHRDNYRTENRRHKSPDNFGEVHRRLDEQQQQRHEDESSRYRDDSRQSRRADDRRDQYQYNESTSMENHLGFHNGGGTVSEHSRDDKFVSPQNCEEKRKYCEEDTDAKPQQPYRFEEIKFEPIWVKCEKSEPPEDFKTLPSVPVLSEYVNPVEPYLRRIQDDGKYKSVHHYLDVQFRLLKEDLVSPLRDGIDLYKKNGTCKGRRIEGAPCSDISIFNVEKVDGKQVTERDGYEMRIIWPAQYDILKLLDNDREMKELGLVMLSCDRFKEDFHLGHIQSSYLMRNGSLHFAVHEETSPFKPNTTYQMAQGTSYLPCYKHVLENLKRISSFKPLPFERYLVHGSKIIFRPNFQQAEKSEYQISEEKKLMKTYNELRSLAACARYTKGKPIPRGVDDDDEDYEFSKSRELSKEDIDLEYRQLQEPIFRPLVGVDIKDSNLIQINKKWYNVSRLLDEFHPDYMDESQRLAFCNTFKYELSLIQGPPGTGKTHIGVQIVKTILQNRSYWKITEPILVVCFTNSGLDNLLERIYQMIENDEELSKDNGRPKIIRFGSKCDSNYLKRQNVMRQDVYEQYKSKVSDGAQKKMSKAGAARRHKADNLAISSYTLFCSRNKLLSYEMLSRVMDPNHQMEIQQFTYDHVDTKGIPLSPDEAIGCWLLERDFGKATKSQTKKAKKPKFQGAQLDSEDENKDYFTVEDSDDEEDELDDEKLLDKLFEKMNLECSGADILSAVHASHADEYYTKGPWEIVQDKRPSVVVLMEKKTKPCNAKFTVDEQINNLVSEIKDMILSSQPVPKKDLNDIKYIFSLARLKRWSLYITWCDALRSIVTENLPRQIREYREACENFKNAQNRVDAEIMRMTMIIGATTTGCSRLRPTLEKVGPRILIVEEAAEVLEAHIISAMISTVEHVVMIGDHKQLRPNPAVHELGVAYGLRISMFERLVERGLPFSQLRQQHRMNLTISDKIVKLSFYDNVTDAENVGLYPDVQGMATNLFFWSHTSMEESPDEVSWLNKHEISMTVALVKHLLKQNYTTNDIVVLATYSAQKNLMYREYANVFGSTPDSNVIPVETVDSFQGKERKIVIVSLVRSHRGGRENTGIGFLAVANRICVALTRAQHGMYIIGNGAYIMNNSELWNKIVNNLRRSNLIEYNLPLKCVAHGNIVTVKDPQDFATKSPEGGCMQKCDTKKFCGHVCERLCHPNMEEEHLQRCLYNCDKKCSNPQFQHRCKKACYEECGSCLYLVEVTLDCGHRITTPCSRINSSKCDQSCTKKLLCGHACAAKCGEECTLVSECSQLVGMPLSCGHIKQLTCSKISANEIDLTCDQRCEKTMLACPHKCAEICGQPCTVECMEVVNVTLGCSHSQDVVCSSFMPGMTDHIECLTKVPKTLSPCKHTELVLCKQAPSTKLCTRRCTSYLEKCGHTCENDCGICFTTKTHICQNMCQKVLNCGHTCSAKCGESCPPCKAFCTNKCEHQSCGAGERGFGRDCSKLCALCVNNCSNKCAHRSCTLKCFEECNVKPCTEPCTDKLKCGHACLGICGEQCPKICGTCERNKYIECVSGTSSTSRVHRLIMIPKCYHVFPVEVLDDHVKKQKEANEKLKCPKCSAFIVGVLRYARYTKKYYLNENMRKLESNIRNIHQSTLEGRVFQAVQDSIGEIRNVTTNLTNASEDILRNFHQKILDIRTSAETFKGKPEHKFKFASLLQVANCCLAITRLLSVSSKFRVSRRKDIPPTFDLMSVRVLGDMPFPKLIDELNRVNIHLSNTYETFMPGAIIPKLKWLISRMTVLQQLTSMCHQLVLEKKDIADSDAHAINDACLNMFRYNEQHNYALNIENFEAIVVKVAPKLLEPTPKFWSWRRLQVPEL.

Disordered stretches follow at residues 212 to 339, 545 to 566, and 583 to 672; these read PHKQ…EGDH, SSDS…NVYG, and HRDN…FVSP. Residues 246–263 show a composition bias toward low complexity; the sequence is ISISNSSPPGLSSVSPIP. Positions 275 to 294 are enriched in pro residues; that stretch reads PQPPGLSIPAPPGISLPTPP. Over residues 297–310 the composition is skewed to polar residues; sequence SLQNHQNDQFEQAH. A compositionally biased stretch (low complexity) spans 311–322; that stretch reads STISRMSENSSS. Residues 545 to 564 show a composition bias toward polar residues; the sequence is SSDSGRQVLSESRGAGSSNV. Basic and acidic residues-rich tracts occupy residues 601 to 638 and 662 to 672; these read GEVH…RRDQ and EHSRDDKFVSP. Residues 1040 to 1545 form the UvrD-like helicase ATP-binding domain; sequence MDESQRLAFC…MNLTISDKIV (506 aa). ATP is bound at residue 1061–1068; that stretch reads GPPGTGKT. 4 NF-X1-type zinc fingers span residues 1769–1791, 1853–1873, 1912–1930, and 2027–2044; these read CGHV…RCLY, CGHA…ECSQ, CPHK…ECME, and CGHT…PCKA.

It belongs to the ZNFX1 family. Interacts with ego-1, csr-1, wago-1 and prg-1. Interacts with wago-4; the interaction promotes the transmission of epigenetic information across generations. As to expression, expressed in germs cells. Not expressed in somatic tissues.

It is found in the cytoplasm. Its subcellular location is the perinuclear region. The protein resides in the cytoplasmic granule. The enzyme catalyses ATP + H2O = ADP + phosphate + H(+). In terms of biological role, epigenetic inheritance factor which, in association with the Argonaute protein wago-4, mediates small RNA-directed transgenerational epigenetic inheritance and thus balances the transgenerational inheritance of epigenetic information. Specifically, maintains a balanced production of small RNAs by preventing the spread of epigenetic signals towards the 5'-end of target mRNAs. Plays a role in small RNA-induced gene silencing in the germline. This is NFX1-type zinc finger-containing protein 1 homolog from Caenorhabditis elegans.